The chain runs to 239 residues: Ribonuclease 3 (239 aa).

The RNase III domain maps to isoleucine 12–glycine 137. Position 50 (glutamate 50) interacts with Mg(2+). The active site involves aspartate 54. Mg(2+) contacts are provided by aspartate 123 and glutamate 126. The active site involves glutamate 126. One can recognise a DRBM domain in the interval aspartate 162–valine 231.

Belongs to the ribonuclease III family. As to quaternary structure, homodimer. Requires Mg(2+) as cofactor.

The protein localises to the cytoplasm. The catalysed reaction is Endonucleolytic cleavage to 5'-phosphomonoester.. Digests double-stranded RNA. Involved in the processing of primary rRNA transcript to yield the immediate precursors to the large and small rRNAs (23S and 16S). Processes some mRNAs, and tRNAs when they are encoded in the rRNA operon. Processes pre-crRNA and tracrRNA of type II CRISPR loci if present in the organism. The sequence is that of Ribonuclease 3 from Agrobacterium fabrum (strain C58 / ATCC 33970) (Agrobacterium tumefaciens (strain C58)).